Reading from the N-terminus, the 201-residue chain is Akirin (201 aa).

A disordered region spans residues Met-1 to Leu-133. A Nuclear localization signal motif is present at residues Pro-20–Cys-25. Phosphoserine is present on residues Ser-39 and Ser-41. Polar residues-rich tracts occupy residues Gly-44–Asn-57 and Glu-65–Ala-75. At Ser-67 the chain carries Phosphoserine. The segment covering Ser-112–Glu-122 has biased composition (low complexity). A phosphoserine mark is found at Ser-123 and Ser-129.

This sequence belongs to the akirin family. In terms of assembly, interacts with dmap1. Interacts with bap60 and rel; interaction is immune stimulation-dependent; activates selected rel target gene promoters. Interacts with bap55; interaction is immune stimulation-dependent. Interacts with twi. In terms of processing, polyubiquitinated via 'Lys-63'-linked ubiquitin by Hyd, promoting interaction with rel. As to expression, ubiquitous.

Its subcellular location is the nucleus. In terms of biological role, molecular adapter that acts as a bridge between a variety of multiprotein complexes, and which is required for embryonic development and for normal innate immune response. Acts as a regulator of embryonic myogenesis by bridging Twist (twi) with the SWI/SNF-like Brahma complex, promoting expression of twi-regulated genes during myogenesis. Effector of immune deficiency pathway (Imd) by acting either downstream of, or at the level of, the NF-kappa-B factor Relish (Rel). Acts by bridging the NF-kappa-B factor Rel and the Brahma complex through bap60 interaction, leading to activation a subset of NF-kappa-B factor Relish (Rel) effector genes. Not part of the Toll pathway. Required for the formation of the heart by promoting expression ot tinman (tin). The sequence is that of Akirin from Drosophila melanogaster (Fruit fly).